The following is a 317-amino-acid chain: NADH-quinone oxidoreductase subunit H 1 (317 aa).

8 helical membrane-spanning segments follow: residues 7–27 (IWVNLILILAVLFAFAAMLSW), 74–94 (AVFVLAPAIVAVTTLLAFAVV), 107–127 (IGVLFFLAMSSLGVYSIVLGG), 147–167 (LSYEVFMGLALMGVVMLAGSF), 179–199 (LWFCIPQILGLATFAVAGIAE), 230–250 (FFIGEYVGITLISAMIVTLFF), 257–277 (VLPPLAWFLLKTFIVIICFVL), and 297–317 (VMLPVTLVNLLLTGAVVLSVA).

Belongs to the complex I subunit 1 family. NDH-1 is composed of 14 different subunits. Subunits NuoA, H, J, K, L, M, N constitute the membrane sector of the complex.

The protein resides in the cell inner membrane. It carries out the reaction a quinone + NADH + 5 H(+)(in) = a quinol + NAD(+) + 4 H(+)(out). In terms of biological role, NDH-1 shuttles electrons from NADH, via FMN and iron-sulfur (Fe-S) centers, to quinones in the respiratory chain. The immediate electron acceptor for the enzyme in this species is believed to be ubiquinone. Couples the redox reaction to proton translocation (for every two electrons transferred, four hydrogen ions are translocated across the cytoplasmic membrane), and thus conserves the redox energy in a proton gradient. This subunit may bind ubiquinone. The sequence is that of NADH-quinone oxidoreductase subunit H 1 from Nitrosospira multiformis (strain ATCC 25196 / NCIMB 11849 / C 71).